Reading from the N-terminus, the 333-residue chain is Ferrochelatase (333 aa).

2 residues coordinate Fe cation: His202 and Glu284.

It belongs to the ferrochelatase family.

It is found in the cytoplasm. The catalysed reaction is heme b + 2 H(+) = protoporphyrin IX + Fe(2+). It participates in porphyrin-containing compound metabolism; protoheme biosynthesis; protoheme from protoporphyrin-IX: step 1/1. Catalyzes the ferrous insertion into protoporphyrin IX. In Francisella tularensis subsp. holarctica (strain LVS), this protein is Ferrochelatase.